Reading from the N-terminus, the 342-residue chain is Dof zinc finger protein DOF4.6 (342 aa).

The segment at 21–54 is disordered; that stretch reads NTCPKPQPQPLQPQQPPSVGGERKARPEKDQAVN. Positions 25-36 are enriched in pro residues; it reads KPQPQPLQPQQP. Basic and acidic residues predominate over residues 41-51; the sequence is GERKARPEKDQ. The segment at 53–107 adopts a Dof-type zinc-finger fold; it reads VNCPRCNSTNTKFCYYNNYSLTQPRYFCKGCRRYWTEGGSLRNIPVGGGSRKNKR. Positions 55, 58, 80, and 83 each coordinate Zn(2+). Residues 94–136 are disordered; sequence RNIPVGGGSRKNKRSHSSSSDISNNHSDSTQPATKKHLSDHHH. Low complexity predominate over residues 110 to 122; it reads SSSSDISNNHSDS. The span at 127–136 shows a compositional bias: basic residues; sequence TKKHLSDHHH.

Accumulates in the stele.

It localises to the nucleus. Functionally, transcription factor that binds specifically to a 5'-AA[AG]G-3' consensus core sequence. This is Dof zinc finger protein DOF4.6 from Arabidopsis thaliana (Mouse-ear cress).